Here is a 493-residue protein sequence, read N- to C-terminus: Cysteine--tRNA ligase (493 aa).

Cysteine 31 serves as a coordination point for Zn(2+). A 'HIGH' region motif is present at residues 33 to 43 (PTVYGDAHLGH). Zn(2+) is bound by residues cysteine 226, histidine 251, and glutamate 255. The short motif at 283–287 (KMGKS) is the 'KMSKS' region element. Residue lysine 286 coordinates ATP.

The protein belongs to the class-I aminoacyl-tRNA synthetase family. In terms of assembly, monomer. Zn(2+) serves as cofactor.

The protein localises to the cytoplasm. The enzyme catalyses tRNA(Cys) + L-cysteine + ATP = L-cysteinyl-tRNA(Cys) + AMP + diphosphate. In Bacteroides thetaiotaomicron (strain ATCC 29148 / DSM 2079 / JCM 5827 / CCUG 10774 / NCTC 10582 / VPI-5482 / E50), this protein is Cysteine--tRNA ligase.